Reading from the N-terminus, the 401-residue chain is Canavanine gamma-lyase (401 aa).

N6-(pyridoxal phosphate)lysine is present on K214.

It belongs to the trans-sulfuration enzymes family. The cofactor is pyridoxal 5'-phosphate.

It carries out the reaction L-canavanine + H2O = N-hydroxyguanidine + L-homoserine. In terms of biological role, lyase involved in the degradation of canavanine, the delta-oxa-analog of arginine, allowing growth on canavanine as sole nitrogen and carbon source. Catalyzes the elimination of hydroxyguanidine from canavanine with a subsequent water addition to yield homoserine. This Rhizobium leguminosarum bv. trifolii (strain WSM2304) protein is Canavanine gamma-lyase.